The chain runs to 422 residues: Ubiquitin-conjugating enzyme E2 Q1 (422 aa).

An N-acetylmethionine modification is found at Met-1. A compositionally biased stretch (low complexity) spans Met-1–Gly-15. 2 disordered regions span residues Met-1–Cys-40 and Pro-174–Gly-221. Gly residues predominate over residues Gln-16 to Pro-35. Positions Val-185–Asp-200 are enriched in acidic residues. Over residues Ala-212–Gly-221 the composition is skewed to basic and acidic residues. One can recognise a UBC core domain in the interval Gln-251–Tyr-415. The active-site Glycyl thioester intermediate is the Cys-351.

Belongs to the ubiquitin-conjugating enzyme family. In terms of assembly, monomer and homodimer. Only the homodimer is linked to ubiquitin through thiolester activation. Interacts (via N-terminus) with B4GALT1 (via N-terminal cytoplasmic domain). The interaction is direct. Post-translationally, autoubiquitinated in vitro in the presence of NEDD4L. In terms of tissue distribution, widely expressed.

It localises to the nucleus. The protein resides in the cell projection. It is found in the filopodium. Its subcellular location is the cytoplasm. The protein localises to the cytosol. It catalyses the reaction S-ubiquitinyl-[E1 ubiquitin-activating enzyme]-L-cysteine + [E2 ubiquitin-conjugating enzyme]-L-cysteine = [E1 ubiquitin-activating enzyme]-L-cysteine + S-ubiquitinyl-[E2 ubiquitin-conjugating enzyme]-L-cysteine.. Its pathway is protein modification; protein ubiquitination. Catalyzes the covalent attachment of ubiquitin to other proteins. May be involved in hormonal homeostasis in females. Involved in regulation of B4GALT1 cell surface expression, B4GALT1-mediated cell adhesion to laminin and embryoid body formation. The chain is Ubiquitin-conjugating enzyme E2 Q1 (UBE2Q1) from Homo sapiens (Human).